The sequence spans 488 residues: GTPase Der (488 aa).

EngA-type G domains are found at residues Pro3 to Pro166 and Ile193 to Val366. GTP-binding positions include Gly9–Ser16, Asp56–Ile60, Asn118–Asp121, Gly199–Ser206, Asp246–Val250, and Asn311–Asp314. The KH-like domain occupies Thr367 to Asp451. Over residues Gly449–Leu461 the composition is skewed to basic and acidic residues. The interval Gly449–Lys488 is disordered. The span at Asn467–Lys488 shows a compositional bias: basic residues.

This sequence belongs to the TRAFAC class TrmE-Era-EngA-EngB-Septin-like GTPase superfamily. EngA (Der) GTPase family. As to quaternary structure, associates with the 50S ribosomal subunit.

GTPase that plays an essential role in the late steps of ribosome biogenesis. The chain is GTPase Der from Pseudomonas entomophila (strain L48).